We begin with the raw amino-acid sequence, 412 residues long: Polyferredoxin protein MvhB (412 aa).

4Fe-4S ferredoxin-type domains follow at residues 2–29 (IVINKEDCIRCGACQGVCPTGAISVKPE), 30–57 (DVIYCDMCGGEPKCVEACPNDALRHEDI), 66–95 (KKITYSPEKCDKCGECVKVCPPGILKLVND), 96–127 (GKASRVPLEGFCVLCQQCVNVCPIEVIGIEGV), 138–166 (DKPIYIVDCVGCGLCVPECPVNAITLPKY), 168–197 (ESIEIDEEKCIKCGICAQTCPWNSVYISGK), 207–236 (ENFTLDKEECIGCNTCVEICPGGFIEPKSD), 237–265 (LTVSLPEICPACGLCEKLCPTDAIELEVK), 275–304 (EGIVYNDENCKFCGRCALNCPNEAIRVVSP), 311–344 (GLKKVDEKESYTICTTCGACTTVCPTGALKLVEV), 356–385 (NRIQYNPSLCDKCGNCVDVCPYGILKLTDD), and 386–412 (EKLPVKGFCILCEKCIDACRFNALLIK). Residues C9, C12, C15, and C19 each coordinate [4Fe-4S] cluster. Residues C75, C78, C81, C85, C107, C110, C113, C117, C146, C149, C152, C156, C177, C180, C183, C187, C216, C219, C222, C226, C245, C248, C251, C255, C284, C287, C290, C294, C324, C327, C330, C334, C365, C368, C371, and C375 each coordinate [4Fe-4S] cluster.

Requires [4Fe-4S] cluster as cofactor.

This Methanothermus fervidus protein is Polyferredoxin protein MvhB (mvhB).